A 450-amino-acid chain; its full sequence is L-lysine-epsilon aminotransferase (450 aa).

Positions 127 and 128 each coordinate pyridoxal 5'-phosphate. 2 residues coordinate 2-oxoglutarate: arginine 168 and glutamine 274. Arginine 168 is an L-lysine binding site. Glutamine 274 contacts pyridoxal 5'-phosphate. The residue at position 300 (lysine 300) is an N6-(pyridoxal phosphate)lysine. A 2-oxoglutarate-binding site is contributed by arginine 423.

The protein belongs to the class-III pyridoxal-phosphate-dependent aminotransferase family. Requires pyridoxal 5'-phosphate as cofactor.

It carries out the reaction L-lysine + 2-oxoglutarate = (S)-2-amino-6-oxohexanoate + L-glutamate. Its pathway is antibiotic biosynthesis; cephamycin C biosynthesis. In terms of biological role, catalyzes the transfer of the terminal amino group of L-lysine to alpha-ketoglutarate to yield L-glutamate and 2-aminoadipate 6-semialdehyde ((S)-2-amino-6-oxohexanoate), which is spontaneously converted to the dehydrated form 1-piperideine 6-carboxylate. This chain is L-lysine-epsilon aminotransferase, found in Amycolatopsis lactamdurans (Nocardia lactamdurans).